A 251-amino-acid chain; its full sequence is Small ribosomal subunit protein uS4c (251 aa).

2 S4 RNA-binding domains span residues Met110–Asn170 and Arg189–Glu251.

It belongs to the universal ribosomal protein uS4 family. Part of the 30S ribosomal subunit. Contacts protein S5. The interaction surface between S4 and S5 is involved in control of translational fidelity.

It localises to the plastid. Its subcellular location is the chloroplast. One of the primary rRNA binding proteins, it binds directly to 16S rRNA where it nucleates assembly of the body of the 30S subunit. In terms of biological role, with S5 and S12 plays an important role in translational accuracy. The sequence is that of Small ribosomal subunit protein uS4c (rps4) from Tetradesmus obliquus (Green alga).